We begin with the raw amino-acid sequence, 368 residues long: Protein-glutamate methylesterase/protein-glutamine glutaminase 1 (368 aa).

The region spanning 4–121 (KVLVVDDSGF…SRNPDKVRQL (118 aa)) is the Response regulatory domain. At aspartate 55 the chain carries 4-aspartylphosphate. The segment at 138-176 (SLPPLPSATSSSHAPASSSSVGASARVGAGASPAPASTS) is disordered. Low complexity predominate over residues 144-176 (SATSSSHAPASSSSVGASARVGAGASPAPASTS). The 197-residue stretch at 172–368 (PASTSAAPKR…IGRHLVEACQ (197 aa)) folds into the CheB-type methylesterase domain. Residues serine 192, histidine 219, and aspartate 312 contribute to the active site.

It belongs to the CheB family. In terms of processing, phosphorylated by CheA. Phosphorylation of the N-terminal regulatory domain activates the methylesterase activity.

It localises to the cytoplasm. It catalyses the reaction [protein]-L-glutamate 5-O-methyl ester + H2O = L-glutamyl-[protein] + methanol + H(+). The enzyme catalyses L-glutaminyl-[protein] + H2O = L-glutamyl-[protein] + NH4(+). Functionally, involved in chemotaxis. Part of a chemotaxis signal transduction system that modulates chemotaxis in response to various stimuli. Catalyzes the demethylation of specific methylglutamate residues introduced into the chemoreceptors (methyl-accepting chemotaxis proteins or MCP) by CheR. Also mediates the irreversible deamidation of specific glutamine residues to glutamic acid. This is Protein-glutamate methylesterase/protein-glutamine glutaminase 1 from Pseudomonas aeruginosa (strain ATCC 15692 / DSM 22644 / CIP 104116 / JCM 14847 / LMG 12228 / 1C / PRS 101 / PAO1).